Here is a 206-residue protein sequence, read N- to C-terminus: Ribosomal RNA small subunit methyltransferase G (206 aa).

Residues G71, F76, 122 to 123 (AE), and R135 each bind S-adenosyl-L-methionine.

Belongs to the methyltransferase superfamily. RNA methyltransferase RsmG family.

The protein localises to the cytoplasm. In terms of biological role, specifically methylates the N7 position of a guanine in 16S rRNA. The sequence is that of Ribosomal RNA small subunit methyltransferase G from Bacteroides thetaiotaomicron (strain ATCC 29148 / DSM 2079 / JCM 5827 / CCUG 10774 / NCTC 10582 / VPI-5482 / E50).